The chain runs to 537 residues: Extracellular exo-inulinase (537 aa).

The first 19 residues, M1 to A19, serve as a signal peptide directing secretion. Residues N40 and D41 each coordinate beta-D-fructose. D41 serves as the catalytic Nucleophile. N49 carries N-linked (GlcNAc...) asparagine glycosylation. The beta-D-fructose site is built by Q57 and W65. N67 is a glycosylation site (N-linked (GlcNAc...) asparagine). S103 serves as a coordination point for beta-D-fructose. Residues N111 and N112 are each glycosylated (N-linked (GlcNAc...) asparagine). Residues R188, D189, and E241 each contribute to the beta-D-fructose site. Residue E241 is the Proton donor/acceptor of the active site. 2 N-linked (GlcNAc...) asparagine glycosylation sites follow: N254 and N300. W335 contributes to the beta-D-fructose binding site. Residues N398 and N430 are each glycosylated (N-linked (GlcNAc...) asparagine).

It belongs to the glycosyl hydrolase 32 family.

The protein resides in the secreted. It catalyses the reaction Hydrolysis of terminal, non-reducing (2-&gt;1)- and (2-&gt;6)-linked beta-D-fructofuranose residues in fructans.. Functionally, exo-inulinase involved in utilization of the plant storage polymer inulin, consisting of fructooligosaccharides with a degree of polymerization (DP) value from 2 to 60. Splits off terminal fructose units successively from the non-reducing end of the inulin molecule, and also hydrolyzes levan, stachyose and raffinose. Hydrolyzes both beta-2,1- as well as beta-2,6-fructosyl linkages in fructooligosaccharides. The protein is Extracellular exo-inulinase of Aspergillus awamori (Black koji mold).